Here is a 90-residue protein sequence, read N- to C-terminus: Co-chaperonin GroES (90 aa).

It belongs to the GroES chaperonin family. In terms of assembly, heptamer of 7 subunits arranged in a ring. Interacts with the chaperonin GroEL.

The protein localises to the cytoplasm. In terms of biological role, together with the chaperonin GroEL, plays an essential role in assisting protein folding. The GroEL-GroES system forms a nano-cage that allows encapsulation of the non-native substrate proteins and provides a physical environment optimized to promote and accelerate protein folding. GroES binds to the apical surface of the GroEL ring, thereby capping the opening of the GroEL channel. This chain is Co-chaperonin GroES, found in Phocaeicola vulgatus (strain ATCC 8482 / DSM 1447 / JCM 5826 / CCUG 4940 / NBRC 14291 / NCTC 11154) (Bacteroides vulgatus).